Here is a 227-residue protein sequence, read N- to C-terminus: 7-cyano-7-deazaguanine synthase (227 aa).

7–17 provides a ligand contact to ATP; the sequence is VSGGMDSLVAT. Zn(2+)-binding residues include cysteine 187, cysteine 195, cysteine 198, and cysteine 201.

The protein belongs to the QueC family. Zn(2+) is required as a cofactor.

It catalyses the reaction 7-carboxy-7-deazaguanine + NH4(+) + ATP = 7-cyano-7-deazaguanine + ADP + phosphate + H2O + H(+). It participates in purine metabolism; 7-cyano-7-deazaguanine biosynthesis. Catalyzes the ATP-dependent conversion of 7-carboxy-7-deazaguanine (CDG) to 7-cyano-7-deazaguanine (preQ(0)). This is 7-cyano-7-deazaguanine synthase from Chlorobaculum tepidum (strain ATCC 49652 / DSM 12025 / NBRC 103806 / TLS) (Chlorobium tepidum).